We begin with the raw amino-acid sequence, 66 residues long: UPF0337 protein SpyM3_0896 (66 aa).

Belongs to the UPF0337 (CsbD) family.

The chain is UPF0337 protein SpyM3_0896 from Streptococcus pyogenes serotype M3 (strain ATCC BAA-595 / MGAS315).